Reading from the N-terminus, the 345-residue chain is Uroporphyrinogen decarboxylase (345 aa).

Residues R27–R31, F46, D76, Y152, S207, and H321 contribute to the substrate site.

The protein belongs to the uroporphyrinogen decarboxylase family. Homodimer.

It localises to the cytoplasm. The enzyme catalyses uroporphyrinogen III + 4 H(+) = coproporphyrinogen III + 4 CO2. It participates in porphyrin-containing compound metabolism; protoporphyrin-IX biosynthesis; coproporphyrinogen-III from 5-aminolevulinate: step 4/4. Functionally, catalyzes the decarboxylation of four acetate groups of uroporphyrinogen-III to yield coproporphyrinogen-III. This is Uroporphyrinogen decarboxylase from Staphylococcus aureus (strain bovine RF122 / ET3-1).